Consider the following 114-residue polypeptide: UPF0102 protein CD630_12710 (114 aa).

The protein belongs to the UPF0102 family.

The chain is UPF0102 protein CD630_12710 from Clostridioides difficile (strain 630) (Peptoclostridium difficile).